The chain runs to 161 residues: tRNA-acetylating toxin 1 (161 aa).

Acetyl-CoA is bound by residues Leu-92, Val-94, His-99, Gly-100, Gly-102, Gly-104, Ala-105, Leu-132, and Glu-135. The active site involves Tyr-140. His-142 provides a ligand contact to acetyl-CoA.

The protein belongs to the acetyltransferase family. GNAT subfamily. Homodimer (in absence of antitoxin). Forms a complex with cognate antitoxin TacA1. Forms a 4:2 antitoxin:toxin complex with cognate antitoxin TacA1.

It carries out the reaction glycyl-tRNA(Gly) + acetyl-CoA = N-acetylglycyl-tRNA(Gly) + CoA + H(+). Functionally, toxic component of a type II toxin-antitoxin (TA) system. Acetylates tRNA and inhibits translation, does not acetylate uncharged tRNA. Upon expression in situ acetylates only Gly-tRNA(Gly). In vitro acetylates mainly Gly and Ile/Leu. Upon induction of the toxin gene in lag phase in rich medium (but not mid-exponential phase) the lag phase is extended by several hours, locking bacteria in a non-growth state. Neutralized only by cognate antitoxin TacA1 (A8), but not by TacA2 or TacA3. Its toxic effect is neutralized by expression of peptidyl-tRNA hydrolase (pth) in lag phase. NAD-dependent protein deacylase (cobB) also play a role in detoxifying TacT targets. Expression increases persister cell formation, which is also abolished by either cognate antitoxin or Pth expression. Plays a role in persister cell formation. The TacA1-TacT1 complex binds (and probably represses) its own promoter DNA but not that of tacA3-tacT3, it does not repress the tacA3-tacT3 promoter. The polypeptide is tRNA-acetylating toxin 1 (Salmonella typhimurium (strain 14028s / SGSC 2262)).